A 211-amino-acid chain; its full sequence is MAPSRNGMVLKPHFHKDWQRRVATWFNQPARKIRRRKARQAKARRIAPRPASGPIRPIVRCPTVRYHTKVRAGRGFSLEELRVAGIHKKVARTIGISVDPRRRNKSTESLQANVQRLKEYRSKLILFPRKPSAPKKGDSSAEELKLATQLTGPVMPVRNVYKKEKARVITEEEKNFKAFASLRMARANARLFGIRAKRAKEAAEQDVEKKK.

Position 16 is an N6-acetyllysine (Lys16). Phosphoserine is present on residues Ser52, Ser77, and Ser106. Residues Lys123 and Lys145 each participate in a glycyl lysine isopeptide (Lys-Gly) (interchain with G-Cter in SUMO2) cross-link. Residue Lys174 forms a Glycyl lysine isopeptide (Lys-Gly) (interchain with G-Cter in SUMO1); alternate linkage. Glycyl lysine isopeptide (Lys-Gly) (interchain with G-Cter in SUMO2); alternate cross-links involve residues Lys174 and Lys177. An N6-acetyllysine; alternate modification is found at Lys177.

Belongs to the eukaryotic ribosomal protein eL13 family. In terms of assembly, component of the 60S large ribosomal subunit (LSU). As to expression, higher levels of expression in benign breast lesions than in carcinomas.

Its subcellular location is the cytoplasm. In terms of biological role, component of the ribosome, a large ribonucleoprotein complex responsible for the synthesis of proteins in the cell. The small ribosomal subunit (SSU) binds messenger RNAs (mRNAs) and translates the encoded message by selecting cognate aminoacyl-transfer RNA (tRNA) molecules. The large subunit (LSU) contains the ribosomal catalytic site termed the peptidyl transferase center (PTC), which catalyzes the formation of peptide bonds, thereby polymerizing the amino acids delivered by tRNAs into a polypeptide chain. The nascent polypeptides leave the ribosome through a tunnel in the LSU and interact with protein factors that function in enzymatic processing, targeting, and the membrane insertion of nascent chains at the exit of the ribosomal tunnel. As part of the LSU, it is probably required for its formation and the maturation of rRNAs. Plays a role in bone development. The polypeptide is Large ribosomal subunit protein eL13 (RPL13) (Homo sapiens (Human)).